The following is a 407-amino-acid chain: Protein RecA (407 aa).

79 to 86 contacts ATP; the sequence is GPESSGKT. Residues 358-407 form a disordered region; that stretch reads LSLEASPEESDAKTLRRXASRGAGASSSRVQEGSAANDHFQDESTTAKLL. Over residues 377-386 the composition is skewed to low complexity; that stretch reads SRGAGASSSR.

This sequence belongs to the RecA family.

The protein resides in the cytoplasm. In terms of biological role, can catalyze the hydrolysis of ATP in the presence of single-stranded DNA, the ATP-dependent uptake of single-stranded DNA by duplex DNA, and the ATP-dependent hybridization of homologous single-stranded DNAs. It interacts with LexA causing its activation and leading to its autocatalytic cleavage. The sequence is that of Protein RecA from Treponema pallidum (strain Nichols).